Reading from the N-terminus, the 130-residue chain is WAP four-disulfide core domain protein 3 (130 aa).

Residues 1–16 (MKALLALGFLASWVAA) form the signal peptide. 2 consecutive WAP domains span residues 17–61 (GEHA…RGDI) and 62–106 (EGGR…IPGL). Disulfide bonds link cysteine 25–cysteine 49, cysteine 32–cysteine 53, cysteine 36–cysteine 48, cysteine 42–cysteine 57, cysteine 69–cysteine 94, cysteine 77–cysteine 98, cysteine 81–cysteine 93, and cysteine 87–cysteine 102. Asparagine 116 carries an N-linked (GlcNAc...) asparagine glycan.

Its subcellular location is the secreted. The protein is WAP four-disulfide core domain protein 3 (Wfdc3) of Mus musculus (Mouse).